We begin with the raw amino-acid sequence, 381 residues long: Creatine kinase M-type (381 aa).

The Phosphagen kinase N-terminal domain maps to 11-98; sequence KLNYKPQEEY…FDPIIQDRHG (88 aa). The region spanning 125-367 is the Phosphagen kinase C-terminal domain; sequence YVLSSRVRTG…KLMVEMEKKL (243 aa). Position 128–132 (128–132) interacts with ATP; it reads SSRVR. Phosphoserine is present on Ser164. Thr166 bears the Phosphothreonine mark. Ser178 is subject to Phosphoserine. Thr180 carries the post-translational modification Phosphothreonine. His191 serves as a coordination point for ATP. Ser199 carries the post-translational modification Phosphoserine. Positions 236 and 292 each coordinate ATP. Thr313 and Thr322 each carry phosphothreonine. Residues 320–325 and Asp335 each bind ATP; that span reads RGTGGV. The residue at position 372 (Ser372) is a Phosphoserine.

This sequence belongs to the ATP:guanido phosphotransferase family. As to quaternary structure, dimer of identical or non-identical chains, which can be either B (brain type) or M (muscle type). With MM being the major form in skeletal muscle and myocardium, MB existing in myocardium, and BB existing in many tissues, especially brain.

It is found in the cytoplasm. The enzyme catalyses creatine + ATP = N-phosphocreatine + ADP + H(+). Functionally, reversibly catalyzes the transfer of phosphate between ATP and various phosphogens (e.g. creatine phosphate). Creatine kinase isoenzymes play a central role in energy transduction in tissues with large, fluctuating energy demands, such as skeletal muscle, heart, brain and spermatozoa. The polypeptide is Creatine kinase M-type (Ckm) (Mus musculus (Mouse)).